A 623-amino-acid chain; its full sequence is Serine/threonine-protein kinase nrc-2 (623 aa).

The disordered stretch occupies residues 1–215; that stretch reads MPSTKNANGE…GLGALPPPIR (215 aa). Composition is skewed to basic and acidic residues over residues 27–36 and 170–180; these read SKDHKDRDAH and LSKEPLEESKD. Over residues 199-209 the composition is skewed to low complexity; that stretch reads LAAPDADGLGA. A Protein kinase domain is found at 242-532; sequence FDKIKLIGKG…ASDIKTHPFF (291 aa). ATP is bound by residues 248 to 256 and Lys271; that span reads IGKGDVGKV. Catalysis depends on Asp367, which acts as the Proton acceptor. The tract at residues 569–596 is disordered; that stretch reads VDISGSRQMGLKGEPLESGMVTPGENAV.

This sequence belongs to the protein kinase superfamily. Ser/Thr protein kinase family. KIN82 subfamily.

The catalysed reaction is L-seryl-[protein] + ATP = O-phospho-L-seryl-[protein] + ADP + H(+). It catalyses the reaction L-threonyl-[protein] + ATP = O-phospho-L-threonyl-[protein] + ADP + H(+). Controls entry of the cell into the asexual developmental program. Required to repress entry into the conidiation program. The chain is Serine/threonine-protein kinase nrc-2 (nrc-2) from Neurospora crassa (strain ATCC 24698 / 74-OR23-1A / CBS 708.71 / DSM 1257 / FGSC 987).